A 257-amino-acid polypeptide reads, in one-letter code: Pimeloyl-[acyl-carrier protein] methyl ester esterase (257 aa).

The AB hydrolase-1 domain occupies 15–241; the sequence is HLVLLHGWGL…KAAHAPFVSH (227 aa). Substrate is bound by residues Trp-22, 82–83, and 143–147; these read SL and FLALQ. The active-site Nucleophile is Ser-82. Residues Asp-207 and His-235 contribute to the active site. His-235 provides a ligand contact to substrate.

Belongs to the AB hydrolase superfamily. Carboxylesterase BioH family. In terms of assembly, monomer.

Its subcellular location is the cytoplasm. The catalysed reaction is 6-carboxyhexanoyl-[ACP] methyl ester + H2O = 6-carboxyhexanoyl-[ACP] + methanol + H(+). Its pathway is cofactor biosynthesis; biotin biosynthesis. Functionally, the physiological role of BioH is to remove the methyl group introduced by BioC when the pimeloyl moiety is complete. It allows to synthesize pimeloyl-ACP via the fatty acid synthetic pathway through the hydrolysis of the ester bonds of pimeloyl-ACP esters. The polypeptide is Pimeloyl-[acyl-carrier protein] methyl ester esterase (Klebsiella pneumoniae subsp. pneumoniae (strain ATCC 700721 / MGH 78578)).